We begin with the raw amino-acid sequence, 236 residues long: Protein YIPF6 (236 aa).

Position 2 is an N-acetylalanine (A2). The Cytoplasmic portion of the chain corresponds to 2-84 (AEAEDSPGEQ…HVLYPRKSNT (83 aa)). S7 is subject to Phosphoserine. Residues 85 to 105 (LLRDWDLWGPLILCVSLALML) traverse the membrane as a helical segment. The Lumenal portion of the chain corresponds to 106-116 (QKSSVEGKRDG). A helical membrane pass occupies residues 117 to 137 (GSPEFAEVFVIIWFGAVTITL). At 138 to 147 (NSKLLGGNIS) the chain is on the cytoplasmic side. The helical transmembrane segment at 148 to 168 (FFQSLCVLGYCVLPLNIAMLI) threads the bilayer. At 169-185 (CRLLLLAGQGPINFMIR) the chain is on the lumenal side. A helical transmembrane segment spans residues 186–206 (LFVVLVMFAWSVIASTAFLAD). Topologically, residues 207–213 (CQPPNRK) are cytoplasmic. A helical membrane pass occupies residues 214–234 (ALAVYPVFLFYFVVSWMILTF). Residues 235–236 (TP) lie on the Lumenal side of the membrane.

Belongs to the YIP1 family. Predominantly interacts with YIPF1 or YIPF2, but may also form a ternary complex with YIPF1 and YIPF2. This interaction may stabilize YIPF1 and YIPF2.

The protein localises to the golgi apparatus membrane. May be required for stable YIPF1 and YIPF2 protein expression. The sequence is that of Protein YIPF6 (Yipf6) from Rattus norvegicus (Rat).